Here is a 156-residue protein sequence, read N- to C-terminus: ATP synthase subunit b (156 aa).

The chain crosses the membrane as a helical span at residues leucine 7 to proline 27.

Belongs to the ATPase B chain family. As to quaternary structure, F-type ATPases have 2 components, F(1) - the catalytic core - and F(0) - the membrane proton channel. F(1) has five subunits: alpha(3), beta(3), gamma(1), delta(1), epsilon(1). F(0) has three main subunits: a(1), b(2) and c(10-14). The alpha and beta chains form an alternating ring which encloses part of the gamma chain. F(1) is attached to F(0) by a central stalk formed by the gamma and epsilon chains, while a peripheral stalk is formed by the delta and b chains.

The protein localises to the cell inner membrane. In terms of biological role, f(1)F(0) ATP synthase produces ATP from ADP in the presence of a proton or sodium gradient. F-type ATPases consist of two structural domains, F(1) containing the extramembraneous catalytic core and F(0) containing the membrane proton channel, linked together by a central stalk and a peripheral stalk. During catalysis, ATP synthesis in the catalytic domain of F(1) is coupled via a rotary mechanism of the central stalk subunits to proton translocation. Functionally, component of the F(0) channel, it forms part of the peripheral stalk, linking F(1) to F(0). The protein is ATP synthase subunit b of Shewanella baltica (strain OS155 / ATCC BAA-1091).